The chain runs to 67 residues: Photosystem II reaction center protein H (67 aa).

A helical transmembrane segment spans residues 27 to 47; it reads GAVPVMAFIGVLLLVFLVILL.

The protein belongs to the PsbH family. In terms of assembly, PSII is composed of 1 copy each of membrane proteins PsbA, PsbB, PsbC, PsbD, PsbE, PsbF, PsbH, PsbI, PsbJ, PsbK, PsbL, PsbM, PsbT, PsbX, PsbY, Psb30/Ycf12, peripheral proteins PsbO, CyanoQ (PsbQ), PsbU, PsbV and a large number of cofactors. It forms dimeric complexes.

Its subcellular location is the cellular thylakoid membrane. One of the components of the core complex of photosystem II (PSII), required for its stability and/or assembly. PSII is a light-driven water:plastoquinone oxidoreductase that uses light energy to abstract electrons from H(2)O, generating O(2) and a proton gradient subsequently used for ATP formation. It consists of a core antenna complex that captures photons, and an electron transfer chain that converts photonic excitation into a charge separation. This chain is Photosystem II reaction center protein H, found in Prochlorococcus marinus (strain MIT 9211).